The sequence spans 126 residues: Large ribosomal subunit protein uL22 (126 aa).

Belongs to the universal ribosomal protein uL22 family. As to quaternary structure, part of the 50S ribosomal subunit.

In terms of biological role, this protein binds specifically to 23S rRNA; its binding is stimulated by other ribosomal proteins, e.g. L4, L17, and L20. It is important during the early stages of 50S assembly. It makes multiple contacts with different domains of the 23S rRNA in the assembled 50S subunit and ribosome. The globular domain of the protein is located near the polypeptide exit tunnel on the outside of the subunit, while an extended beta-hairpin is found that lines the wall of the exit tunnel in the center of the 70S ribosome. The polypeptide is Large ribosomal subunit protein uL22 (Sphingopyxis alaskensis (strain DSM 13593 / LMG 18877 / RB2256) (Sphingomonas alaskensis)).